Reading from the N-terminus, the 165-residue chain is Choriogonadotropin subunit beta (165 aa).

The signal sequence occupies residues 1–20; that stretch reads METLQGLLLWLLLSMGGAQA. 6 disulfide bridges follow: C29-C77, C43-C92, C46-C130, C54-C108, C58-C110, and C113-C120. N-linked (GlcNAc...) asparagine glycosylation is found at N33 and N50. A disordered region spans residues 131 to 165; sequence DDPNLQASSSSKDPPPSPPSPSRLLEPAGTPFLPQ. O-linked (GalNAc...) serine glycans are attached at residues S141, S147, and S152.

The protein belongs to the glycoprotein hormones subunit beta family. Heterodimer of a common alpha chain and a unique beta chain which confers biological specificity to thyrotropin, lutropin, follitropin and gonadotropin. Placenta.

It localises to the secreted. Stimulates the ovaries to synthesize the steroids that are essential for the maintenance of pregnancy. This is Choriogonadotropin subunit beta (CGB) from Papio anubis (Olive baboon).